The following is a 257-amino-acid chain: NAD kinase (257 aa).

The Proton acceptor role is filled by Asp44. NAD(+) is bound by residues Asp44–Gly45, Arg49, Asn116–Glu117, Asp146, Ala154, and Thr157–Ser162.

The protein belongs to the NAD kinase family. The cofactor is a divalent metal cation.

Its subcellular location is the cytoplasm. The catalysed reaction is NAD(+) + ATP = ADP + NADP(+) + H(+). Functionally, involved in the regulation of the intracellular balance of NAD and NADP, and is a key enzyme in the biosynthesis of NADP. Catalyzes specifically the phosphorylation on 2'-hydroxyl of the adenosine moiety of NAD to yield NADP. In Rhizorhabdus wittichii (strain DSM 6014 / CCUG 31198 / JCM 15750 / NBRC 105917 / EY 4224 / RW1) (Sphingomonas wittichii), this protein is NAD kinase.